We begin with the raw amino-acid sequence, 407 residues long: [Pyruvate dehydrogenase (acetyl-transferring)] kinase isozyme 2, mitochondrial (407 aa).

Positions 135-364 constitute a Histidine kinase domain; that stretch reads LEYKDTYGDD…DAVIYLKALS (230 aa). 2 positions are modified to phosphotyrosine: Y215 and Y216. ATP-binding positions include 251–258, D290, 309–310, and 325–330; these read ELFKNAMR, ST, and GFGYGL. K376 is modified (N6-succinyllysine).

It belongs to the PDK/BCKDK protein kinase family. As to quaternary structure, homodimer, and heterodimer with PDK1. Interacts with the pyruvate dehydrogenase complex subunit DLAT, and is part of the multimeric pyruvate dehydrogenase complex that contains multiple copies of pyruvate dehydrogenase (E1), dihydrolipoamide acetyltransferase (DLAT, E2) and lipoamide dehydrogenase (DLD, E3). Detected in heart (at protein level). Highest level of expression in heart and skeletal muscle and the lowest in spleen and lung. Liver, kidney, brain and testis levels are intermediate.

The protein resides in the mitochondrion matrix. The enzyme catalyses L-seryl-[pyruvate dehydrogenase E1 alpha subunit] + ATP = O-phospho-L-seryl-[pyruvate dehydrogenase E1 alpha subunit] + ADP + H(+). Activity increases in response to increased acetyl-CoA and NADH levels and upon binding to the pyruvate dehydrogenase subunit DLAT. Inhibited by ADP and pyruvate; these compounds interfere with DLAT binding and thereby inhibit kinase activity. Inhibited by dichloroacetate. Inhibited by AZD7545; this compound interferes with DLAT binding and thereby inhibits kinase activity. Reactive oxygen species cause the formation of disulfide bonds, and thereby inhibit the enzyme. In terms of biological role, kinase that plays a key role in the regulation of glucose and fatty acid metabolism and homeostasis via phosphorylation of the pyruvate dehydrogenase subunits PDHA1 and PDHA2. This inhibits pyruvate dehydrogenase activity, and thereby regulates metabolite flux through the tricarboxylic acid cycle, down-regulates aerobic respiration and inhibits the formation of acetyl-coenzyme A from pyruvate. Inhibition of pyruvate dehydrogenase decreases glucose utilization and increases fat metabolism. Mediates cellular responses to insulin. Plays an important role in maintaining normal blood glucose levels and in metabolic adaptation to nutrient availability. Via its regulation of pyruvate dehydrogenase activity, plays an important role in maintaining normal blood pH and in preventing the accumulation of ketone bodies under starvation. Plays a role in the regulation of cell proliferation and in resistance to apoptosis under oxidative stress. Plays a role in p53/TP53-mediated apoptosis. This Rattus norvegicus (Rat) protein is [Pyruvate dehydrogenase (acetyl-transferring)] kinase isozyme 2, mitochondrial (Pdk2).